The following is a 435-amino-acid chain: 3-phosphoshikimate 1-carboxyvinyltransferase (435 aa).

3-phosphoshikimate contacts are provided by Lys-22, Ser-23, and Arg-27. Position 22 (Lys-22) interacts with phosphoenolpyruvate. Phosphoenolpyruvate-binding residues include Gly-94 and Arg-122. 3-phosphoshikimate contacts are provided by Ser-166, Gln-168, Asp-314, and Lys-341. Gln-168 is a binding site for phosphoenolpyruvate. The active-site Proton acceptor is Asp-314. Positions 345 and 388 each coordinate phosphoenolpyruvate.

It belongs to the EPSP synthase family. In terms of assembly, monomer.

Its subcellular location is the cytoplasm. The enzyme catalyses 3-phosphoshikimate + phosphoenolpyruvate = 5-O-(1-carboxyvinyl)-3-phosphoshikimate + phosphate. The protein operates within metabolic intermediate biosynthesis; chorismate biosynthesis; chorismate from D-erythrose 4-phosphate and phosphoenolpyruvate: step 6/7. Functionally, catalyzes the transfer of the enolpyruvyl moiety of phosphoenolpyruvate (PEP) to the 5-hydroxyl of shikimate-3-phosphate (S3P) to produce enolpyruvyl shikimate-3-phosphate and inorganic phosphate. This chain is 3-phosphoshikimate 1-carboxyvinyltransferase, found in Ruthia magnifica subsp. Calyptogena magnifica.